Consider the following 378-residue polypeptide: Zinc transporter 7 (378 aa).

At 1–37 the chain is on the cytoplasmic side; that stretch reads MLPLSIKDDEYKPPKFNLFGKISGWFRSILSDKTSRN. A helical transmembrane segment spans residues 38 to 58; it reads LFFFLCLNLSFAFVELLYGIW. Residues 59–67 lie on the Lumenal side of the membrane; it reads SNCLGLISD. A helical transmembrane segment spans residues 68–88; sequence SFHMFFDSTAILAGLAASVIS. At 89–102 the chain is on the cytoplasmic side; the sequence is KWRDNDAFSYGYVR. A helical membrane pass occupies residues 103–123; the sequence is AEVLAGFVNGLFLIFTAFFIF. Residues 124–140 are Lumenal-facing; it reads SEGVERALAPPDVHHER. A helical membrane pass occupies residues 141–161; it reads LLLVSILGFVVNLVGIFVFNH. Residues 161–220 are his-rich loop; that stretch reads HGGHGHSHGSGHGHSHSLFNGALDHSHGHEDHCHSHEAKHGAAHSHDHDHAHGHGHLHSH. Residues 162 to 238 lie on the Cytoplasmic side of the membrane; that stretch reads GGHGHSHGSG…AGPSRQILQG (77 aa). The segment covering 186-223 has biased composition (basic and acidic residues); the sequence is SHGHEDHCHSHEAKHGAAHSHDHDHAHGHGHLHSHDGP. The segment at 186–224 is disordered; the sequence is SHGHEDHCHSHEAKHGAAHSHDHDHAHGHGHLHSHDGPS. A helical membrane pass occupies residues 239–259; sequence VFLHILADTLGSIGVIASAIM. Topologically, residues 260–264 are lumenal; that stretch reads MQNFG. A helical membrane pass occupies residues 265-285; the sequence is LMIADPICSILIAILIVVSVI. The Cytoplasmic portion of the chain corresponds to 286–378; it reads PLLRESVGIL…LYVQIDFAAM (93 aa).

This sequence belongs to the cation diffusion facilitator (CDF) transporter (TC 2.A.4) family. SLC30A subfamily. As to quaternary structure, homooligomer. In terms of tissue distribution, highly expressed in liver, spleen, duodenum and part of the jejunum of small intestine (at protein level). Moderately expressed in kidney, lung, and brain. Barely detectable in heart. In brain, expressed in cerebellum, cerebral cortex and hippocampus (at protein level).

It localises to the golgi apparatus membrane. The protein resides in the cytoplasmic vesicle. The protein localises to the golgi apparatus. Its subcellular location is the trans-Golgi network. It is found in the sarcoplasmic reticulum. It localises to the mitochondrion. The catalysed reaction is Zn(2+)(in) = Zn(2+)(out). Functionally, zinc ion transporter mediating zinc entry from the cytosol into the lumen of organelles along the secretory pathway. By contributing to zinc ion homeostasis within the early secretory pathway, regulates the activation and folding of enzymes like alkaline phosphatases. This chain is Zinc transporter 7, found in Mus musculus (Mouse).